Consider the following 417-residue polypeptide: MLEQMGIAAKQASYKLAQLSSREKNRVLEKIADELEAQSESILNANAQDVADARANGLSEAMLDRLALTPARLKDIADDVRQVCNLADPVGQVIDGGVLDSGLRLERRRVPLGVIGVIYEARPNVTVDVASLCLKTGNAVILRGGKETCRTNAATVAVIQDALKSCGLPAGAVQAIDNPDRALVSEMLRMDKYIDMLIPRGGAGLHKLCREQSTIPVITGGIGVCHIYVDESAEIAEALKVIVNAKTQRPSTCNTVETLLVNKNIADSFLPALSKQMAESGVTLHADAAALAQLQAGPAKVVAVKAEEYDDEFLSLDLNVKIVSDLDDAIAHIREHGTQHSDAILTRDMRNAQRFVNEVDSSAVYVNASTRFTDGGQFGLGAEVAVSTQKLHARGPMGLEALTTYKWIGIGDYTIRA.

Belongs to the gamma-glutamyl phosphate reductase family.

The protein localises to the cytoplasm. The catalysed reaction is L-glutamate 5-semialdehyde + phosphate + NADP(+) = L-glutamyl 5-phosphate + NADPH + H(+). It functions in the pathway amino-acid biosynthesis; L-proline biosynthesis; L-glutamate 5-semialdehyde from L-glutamate: step 2/2. Functionally, catalyzes the NADPH-dependent reduction of L-glutamate 5-phosphate into L-glutamate 5-semialdehyde and phosphate. The product spontaneously undergoes cyclization to form 1-pyrroline-5-carboxylate. The polypeptide is Gamma-glutamyl phosphate reductase (Escherichia coli O81 (strain ED1a)).